We begin with the raw amino-acid sequence, 52 residues long: Conotoxin reg3h (52 aa).

Residue Ala-1 is a signal peptide. A propeptide spanning residues 2–33 (LPLDGDQPADQPAERMQDISPELNPLFHPVKR) is cleaved from the precursor. 3 cysteine pairs are disulfide-bonded: Cys-35–Cys-49, Cys-36–Cys-47, and Cys-41–Cys-50. Pro-38, Pro-48, and Pro-51 each carry 4-hydroxyproline. Asn-52 carries the asparagine amide modification.

Expressed by the venom duct.

It localises to the secreted. This Conus regius (Crown cone) protein is Conotoxin reg3h.